The sequence spans 335 residues: 3-ketodihydrosphingosine reductase TSC10 (335 aa).

NADPH is bound by residues G42, S44, S45, G46, R67, D68, K71, D95, and L96. The short motif at 42–46 (GGSSG) is the GXSXG element. The segment at 141 to 207 (LKDGLDGVYW…RGLSDALRSE (67 aa)) is involved in homodimer formation. Y190 acts as the Proton acceptor in catalysis. Positions 190, 194, and 223 each coordinate NADP(+). The Lowers pKa of active site Tyr role is filled by K194. Residues 288–308 (TNNFLLDTLWLIVSSVGVPIW) form a helical membrane-spanning segment.

Belongs to the short-chain dehydrogenases/reductases (SDR) family. In terms of assembly, homodimer; a minor portion forms homotetramers.

It localises to the endoplasmic reticulum membrane. The catalysed reaction is sphinganine + NADP(+) = 3-oxosphinganine + NADPH + H(+). It functions in the pathway lipid metabolism; sphingolipid metabolism. Catalyzes the reduction of 3'-oxosphinganine (3-ketodihydrosphingosine/KDS) to sphinganine (dihydrosphingosine/DHS), the second step of de novo sphingolipid biosynthesis. The chain is 3-ketodihydrosphingosine reductase TSC10 (TSC10) from Cryptococcus neoformans var. neoformans serotype D (strain JEC21 / ATCC MYA-565) (Filobasidiella neoformans).